A 207-amino-acid chain; its full sequence is Dephospho-CoA kinase (207 aa).

The DPCK domain maps to 5 to 203; that stretch reads AVGLTGGIAC…ARYRALASVF (199 aa). ATP is bound at residue 13 to 18; it reads ACGKSL.

This sequence belongs to the CoaE family.

It is found in the cytoplasm. It carries out the reaction 3'-dephospho-CoA + ATP = ADP + CoA + H(+). The protein operates within cofactor biosynthesis; coenzyme A biosynthesis; CoA from (R)-pantothenate: step 5/5. In terms of biological role, catalyzes the phosphorylation of the 3'-hydroxyl group of dephosphocoenzyme A to form coenzyme A. The polypeptide is Dephospho-CoA kinase (Xylella fastidiosa (strain 9a5c)).